The primary structure comprises 805 residues: Probable exo-1,4-beta-xylosidase xlnD (805 aa).

The N-terminal stretch at 1–17 is a signal peptide; the sequence is MAVAALALLALLPQALG. N-linked (GlcNAc...) asparagine glycans are attached at residues asparagine 20, asparagine 115, asparagine 140, asparagine 235, and asparagine 244. Aspartate 308 is a catalytic residue. Asparagine 350, asparagine 383, asparagine 405, asparagine 434, asparagine 445, asparagine 486, asparagine 490, asparagine 622, asparagine 653, asparagine 667, asparagine 689, and asparagine 711 each carry an N-linked (GlcNAc...) asparagine glycan.

It belongs to the glycosyl hydrolase 3 family.

Its subcellular location is the secreted. The enzyme catalyses Hydrolysis of (1-&gt;4)-beta-D-xylans, to remove successive D-xylose residues from the non-reducing termini.. It participates in glycan degradation; xylan degradation. Functionally, xylan 1,4-beta-xylosidase involved in the hydrolysis of xylan, a major structural heterogeneous polysaccharide found in plant biomass representing the second most abundant polysaccharide in the biosphere, after cellulose. This is Probable exo-1,4-beta-xylosidase xlnD (xlnD) from Aspergillus aculeatus.